A 397-amino-acid chain; its full sequence is Succinate--CoA ligase [ADP-forming] subunit beta (397 aa).

In terms of domain architecture, ATP-grasp spans 9-254 (KALLKGYGAP…ETEEDAKEIE (246 aa)). Residues K46, 53–55 (GRG), E109, A112, and E117 contribute to the ATP site. The Mg(2+) site is built by N209 and D223. Residues N274 and 331–333 (GIM) each bind substrate.

It belongs to the succinate/malate CoA ligase beta subunit family. As to quaternary structure, heterotetramer of two alpha and two beta subunits. Mg(2+) serves as cofactor.

The catalysed reaction is succinate + ATP + CoA = succinyl-CoA + ADP + phosphate. It carries out the reaction GTP + succinate + CoA = succinyl-CoA + GDP + phosphate. It functions in the pathway carbohydrate metabolism; tricarboxylic acid cycle; succinate from succinyl-CoA (ligase route): step 1/1. Succinyl-CoA synthetase functions in the citric acid cycle (TCA), coupling the hydrolysis of succinyl-CoA to the synthesis of either ATP or GTP and thus represents the only step of substrate-level phosphorylation in the TCA. The beta subunit provides nucleotide specificity of the enzyme and binds the substrate succinate, while the binding sites for coenzyme A and phosphate are found in the alpha subunit. This is Succinate--CoA ligase [ADP-forming] subunit beta from Rhizobium etli (strain CIAT 652).